Here is a 227-residue protein sequence, read N- to C-terminus: Protein LppM (227 aa).

The first 24 residues, 1-24 (MARTRRRGMLAIAMLLMLVPLATG), serve as a signal peptide directing secretion. Cysteine 25 is lipidated: N-palmitoyl cysteine. The S-diacylglycerol cysteine moiety is linked to residue cysteine 25. Residues 26–185 (LRVRASITIS…ARYTDPNTRS (160 aa)) are important for bacterial uptake by host macrophages. A helical membrane pass occupies residues 190–210 (GIWLGIAAFAAAGVVAVLAWI).

Post-translationally, a shorter form (about 20 kDa) is secreted; upon overexpression of the whole protein in M.smegmatis the C-terminus of the short form is about residue 187, suggesting it is generated by cleavage of the protein before its C-terminal transmembrane domain.

Its subcellular location is the membrane. It localises to the secreted. The protein resides in the cell wall. Functionally, a putative lipoprotein that seems to be specialized for the initial steps of macrophage infection. A non-acylated fragment (residues 26-185) binds phosphatidyl-myo-inositol mannosides (PIMs). Limits, in a TLR2-dependent fashion, bacterial uptake by host (mouse); this effect may be mediated by nonacylated fragment 26-185. Plays a TLR2-dependent role in host phagosome maturation arrest. Plays a TLR2-independent role in chemokine production during the first 24 hours of mouse infection. The sequence is that of Protein LppM (lppM) from Mycobacterium tuberculosis (strain ATCC 25618 / H37Rv).